A 342-amino-acid polypeptide reads, in one-letter code: DNA-directed RNA polymerase subunit alpha (342 aa).

The segment at methionine 1 to aspartate 238 is alpha N-terminal domain (alpha-NTD). The tract at residues phenylalanine 254–isoleucine 342 is alpha C-terminal domain (alpha-CTD).

The protein belongs to the RNA polymerase alpha chain family. In terms of assembly, homodimer. The RNAP catalytic core consists of 2 alpha, 1 beta, 1 beta' and 1 omega subunit. When a sigma factor is associated with the core the holoenzyme is formed, which can initiate transcription.

The enzyme catalyses RNA(n) + a ribonucleoside 5'-triphosphate = RNA(n+1) + diphosphate. Functionally, DNA-dependent RNA polymerase catalyzes the transcription of DNA into RNA using the four ribonucleoside triphosphates as substrates. This Pelagibacter ubique (strain HTCC1062) protein is DNA-directed RNA polymerase subunit alpha.